The chain runs to 544 residues: Chaperonin GroEL (544 aa).

ATP is bound by residues 30 to 33 (TLGP), lysine 51, 87 to 91 (DGTTT), glycine 415, and aspartate 495.

This sequence belongs to the chaperonin (HSP60) family. Forms a cylinder of 14 subunits composed of two heptameric rings stacked back-to-back. Interacts with the co-chaperonin GroES.

The protein resides in the cytoplasm. It carries out the reaction ATP + H2O + a folded polypeptide = ADP + phosphate + an unfolded polypeptide.. Functionally, together with its co-chaperonin GroES, plays an essential role in assisting protein folding. The GroEL-GroES system forms a nano-cage that allows encapsulation of the non-native substrate proteins and provides a physical environment optimized to promote and accelerate protein folding. In Bartonella bacilliformis (strain ATCC 35685 / KC583 / Herrer 020/F12,63), this protein is Chaperonin GroEL.